The following is a 144-amino-acid chain: 3-dehydroquinate dehydratase (144 aa).

Tyrosine 22 acts as the Proton acceptor in catalysis. Substrate contacts are provided by asparagine 73, histidine 79, and aspartate 86. The Proton donor role is filled by histidine 99. Residues 100–101 and arginine 110 each bind substrate; that span reads LS.

This sequence belongs to the type-II 3-dehydroquinase family. Homododecamer.

It catalyses the reaction 3-dehydroquinate = 3-dehydroshikimate + H2O. Its pathway is metabolic intermediate biosynthesis; chorismate biosynthesis; chorismate from D-erythrose 4-phosphate and phosphoenolpyruvate: step 3/7. In terms of biological role, catalyzes a trans-dehydration via an enolate intermediate. In Geotalea daltonii (strain DSM 22248 / JCM 15807 / FRC-32) (Geobacter daltonii), this protein is 3-dehydroquinate dehydratase.